A 302-amino-acid polypeptide reads, in one-letter code: Tritrans,polycis-undecaprenyl-diphosphate synthase (geranylgeranyl-diphosphate specific) (302 aa).

Asp-33 is a catalytic residue. Residue Asp-33 coordinates Mg(2+). Substrate contacts are provided by residues 34-37 (GNRR) and 78-80 (STE). Asn-81 (proton acceptor) is an active-site residue. Residues Phe-82, Arg-84, Arg-203, and 209–211 (RTS) contribute to the substrate site.

The protein belongs to the UPP synthase family. In terms of assembly, homodimer. Mg(2+) serves as cofactor.

The catalysed reaction is geranylgeranyl diphosphate + 7 isopentenyl diphosphate = tri-trans,hepta-cis-undecaprenyl diphosphate + 7 diphosphate. Catalyzes the sequential condensation of isopentenyl diphosphate (IPP) with geranylgeranyl diphosphate (GGPP) to yield (2Z,6Z,10Z,14Z,18Z,22Z,26Z,30E,34E,38E)-undecaprenyl diphosphate (tritrans,heptacis-UPP). It is probably the precursor of glycosyl carrier lipids. The polypeptide is Tritrans,polycis-undecaprenyl-diphosphate synthase (geranylgeranyl-diphosphate specific) (Halobacterium salinarum (strain ATCC 700922 / JCM 11081 / NRC-1) (Halobacterium halobium)).